A 287-amino-acid chain; its full sequence is Prohibitin-1 (287 aa).

Residues 102–116 (VLQLPAIYQNLGLDY) are interaction with ATG8. The AIM signature appears at 109–112 (YQNL). Residues 180 to 224 (EFTKAVEQKQIAQQDAERAKFLVEKAEQERQASVIRAEGEAESAE) adopt a coiled-coil conformation. The disordered stretch occupies residues 264–287 (SQHSGGGNSESSGSPNSLLLNIGR). Residues 272–287 (SESSGSPNSLLLNIGR) are compositionally biased toward low complexity.

This sequence belongs to the prohibitin family. The mitochondrial prohibitin complex consists of two subunits (PHB1 and PHB2). The subunits assemble into a membrane-associated ring-shaped supercomplex of approximately 1 mDa. The mitochondrial prohibitin complex interacts with the m-AAA protease, a heterohexamer composed of YTA12/RCA1 and YTA10/AFG3. The mitochondrial prohibitin complex interacts with ATG8 and the interaction may support mitophagosome assembly. The N-terminus is blocked.

It localises to the mitochondrion inner membrane. Functionally, prohibitin probably acts as a holdase/unfoldase for the stabilization of newly synthesized mitochondrial proteins. Involved in mitophagy; may act as an adapter for ATG8 that supports mitophagosome assembly. Negatively regulates the proteolytic processing of ATG32 via the i-AAA protease. Acts as a negative regulator of the m-AAA protease. The protein is Prohibitin-1 (PHB1) of Saccharomyces cerevisiae (strain ATCC 204508 / S288c) (Baker's yeast).